We begin with the raw amino-acid sequence, 218 residues long: Adenylate kinase (218 aa).

Position 10-15 (10-15) interacts with ATP; it reads GAGKGT. The NMP stretch occupies residues 30 to 59; sequence STGDMLRAAVKAGTPLGLEAKKVMDAGGLV. AMP-binding positions include T31, R36, 57 to 59, 85 to 88, and Q92; these read GLV and GFPR. The LID stretch occupies residues 122–159; that stretch reads GRRVHVASGRTYHVKFNPPKVAGKDDETGEDLIQRADD. ATP contacts are provided by residues R123 and 132-133; that span reads TY. AMP contacts are provided by R156 and R167. G203 provides a ligand contact to ATP.

Belongs to the adenylate kinase family. In terms of assembly, monomer.

It localises to the cytoplasm. The enzyme catalyses AMP + ATP = 2 ADP. Its pathway is purine metabolism; AMP biosynthesis via salvage pathway; AMP from ADP: step 1/1. Catalyzes the reversible transfer of the terminal phosphate group between ATP and AMP. Plays an important role in cellular energy homeostasis and in adenine nucleotide metabolism. In Laribacter hongkongensis (strain HLHK9), this protein is Adenylate kinase.